The sequence spans 61 residues: Small ribosomal subunit protein uS14 (61 aa).

The Zn(2+) site is built by Cys24, Cys27, Cys40, and Cys43.

This sequence belongs to the universal ribosomal protein uS14 family. Zinc-binding uS14 subfamily. Part of the 30S ribosomal subunit. Contacts proteins S3 and S10. Zn(2+) is required as a cofactor.

In terms of biological role, binds 16S rRNA, required for the assembly of 30S particles and may also be responsible for determining the conformation of the 16S rRNA at the A site. The protein is Small ribosomal subunit protein uS14 of Borrelia garinii subsp. bavariensis (strain ATCC BAA-2496 / DSM 23469 / PBi) (Borreliella bavariensis).